The chain runs to 595 residues: GRB2-associated-binding protein 3 (595 aa).

The region spanning 5–117 is the PH domain; sequence DTVCMGWLIK…WVHSISQVCN (113 aa). The disordered stretch occupies residues 295-339; that stretch reads SGVKELNIMSNTPPPRPPKPSYLSEQRQDQPLLTGHSSNKKPGYT. Over residues 317–331 the composition is skewed to polar residues; sequence LSEQRQDQPLLTGHS. A Phosphoserine modification is found at Ser346. Disordered regions lie at residues 389–408 and 418–463; these read PSAE…SELR and PMSS…QEHT. Over residues 454 to 463 the composition is skewed to polar residues; the sequence is RNLSTIQEHT. Ser480 carries the post-translational modification Phosphoserine. The disordered stretch occupies residues 493–513; the sequence is STPSEEEEEEEEEEEEEEEEE. A compositionally biased stretch (acidic residues) spans 496 to 513; that stretch reads SEEEEEEEEEEEEEEEEE.

This sequence belongs to the GAB family. As to quaternary structure, interacts with PIK3R/p85, SHP2 and GRAP2/MONA. May interact with Grb2. In terms of processing, phosphorylated on tyrosine residue(s) after macrophage colony-stimulating factor (M-CSF) receptor stimulation. Highly expressed in spleen and thymus and weakly in brain, heart, lung, kidney, uterus, and embryonic stem cells. Also expressed in myeloid and macrophage cell lines.

The chain is GRB2-associated-binding protein 3 (Gab3) from Mus musculus (Mouse).